Consider the following 215-residue polypeptide: Protein C' (215 aa).

The interval 12 to 34 (MPSFLKKILKLRGRRQEDESRSR) is disordered. Residues 15–22 (FLKKILKL) form an involved in self-degradation and in host STAT1 degradation region.

This sequence belongs to the respirovirus protein C family. In terms of assembly, the different isoforms interact (via C-terminus) with unphosphorylated and phosphorylated human STAT1 (via N-terminus), favoring the formation of parallel STAT1 homodimers. The different isoforms do not interact with host STAT2. C protein interacts with L protein; this interaction has an inhibitory effect on viral transcription and replication. In terms of processing, Y1 and Y2 proteins are produced not only by alternative initiation, but also by proteolytic cleavage of C'. Only alternative initiation is detected in vitro, whereas in vivo cleavage seems to be predominant.

The protein localises to the host cytoplasm. The different products prevent the establishment of cellular antiviral state by blocking the interferon-alpha/beta (IFN-alpha/beta) and IFN-gamma signaling pathways. They inhibit IFN-alpha/beta induced tyrosine phosphorylation of STAT1 and STAT2. Blocking the IFN-alpha/beta pathway requires binding to STAT1 in the cytoplasm. They inhibit IFN-gamma induced serine phosphorylation of STAT1. Block the IFN-gamma pathway by binding to and stabilizing the parallel form of the STAT1 dimer, further inducing high-molecular-weight complex formation and inhibition of transcription by IFN-gamma. May also have a role in preventing the cell to enter apoptosis. Modulate regulation of viral transcription and replication. Overexpression inhibits the viral RNA polymerase. The absence of all C', C, Y1 and Y2 proteins leads to viral delayed growth. Plays an important role in virion particles release. Modulates virion shape. The polypeptide is Protein C' (P/V/C) (Sendai virus (strain Nagoya) (SeV)).